The sequence spans 237 residues: Ubiquitin-conjugating enzyme E2 34 (237 aa).

In terms of domain architecture, UBC core spans 5 to 162 (ACIKRLQKEY…FPEYVEKYNQ (158 aa)). Residue Cys-87 is the Glycyl thioester intermediate of the active site. Positions 168 to 207 (QATTQLTTPESPQKSDTKVESEKTIDPTKGDSEGGLKERK) are disordered. The segment covering 180 to 204 (QKSDTKVESEKTIDPTKGDSEGGLK) has biased composition (basic and acidic residues). Residues 214-234 (LPAWIILLLVSVFGVVMALPL) form a helical membrane-spanning segment.

Belongs to the ubiquitin-conjugating enzyme family.

It localises to the membrane. The enzyme catalyses S-ubiquitinyl-[E1 ubiquitin-activating enzyme]-L-cysteine + [E2 ubiquitin-conjugating enzyme]-L-cysteine = [E1 ubiquitin-activating enzyme]-L-cysteine + S-ubiquitinyl-[E2 ubiquitin-conjugating enzyme]-L-cysteine.. It participates in protein modification; protein ubiquitination. Its function is as follows. Accepts the ubiquitin from the E1 complex and catalyzes its covalent attachment to other proteins. This chain is Ubiquitin-conjugating enzyme E2 34 (UBC34), found in Arabidopsis thaliana (Mouse-ear cress).